Here is a 356-residue protein sequence, read N- to C-terminus: sn-glycerol-3-phosphate import ATP-binding protein UgpC (356 aa).

One can recognise an ABC transporter domain in the interval 4–235 (LKLQAVTKSW…PASLFVASFI (232 aa)). Residue 37-44 (GPSGCGKS) participates in ATP binding.

Belongs to the ABC transporter superfamily. sn-glycerol-3-phosphate importer (TC 3.A.1.1.3) family. As to quaternary structure, the complex is composed of two ATP-binding proteins (UgpC), two transmembrane proteins (UgpA and UgpE) and a solute-binding protein (UgpB).

The protein resides in the cell inner membrane. The enzyme catalyses sn-glycerol 3-phosphate(out) + ATP + H2O = sn-glycerol 3-phosphate(in) + ADP + phosphate + H(+). Its function is as follows. Part of the ABC transporter complex UgpBAEC involved in sn-glycerol-3-phosphate (G3P) import. Responsible for energy coupling to the transport system. In Escherichia coli O6:H1 (strain CFT073 / ATCC 700928 / UPEC), this protein is sn-glycerol-3-phosphate import ATP-binding protein UgpC.